Reading from the N-terminus, the 157-residue chain is Fimbrial protein Q (157 aa).

A propeptide spanning residues 1–6 (MNAQKG) is cleaved from the precursor. Phenylalanine 7 is modified (N-methylphenylalanine). The cysteines at positions 136 and 155 are disulfide-linked.

Belongs to the N-Me-Phe pilin family. As to quaternary structure, the pili are polar flexible filaments of about 5.4 nanometers diameter and 2.5 micrometers average length; they consist of only a single polypeptide chain arranged in a helical configuration of five subunits per turn in the assembled pilus.

Its subcellular location is the fimbrium. This chain is Fimbrial protein Q (tfpQ), found in Moraxella bovis.